The sequence spans 509 residues: Maturase K (509 aa).

It belongs to the intron maturase 2 family. MatK subfamily.

The protein localises to the plastid. It localises to the chloroplast. Functionally, usually encoded in the trnK tRNA gene intron. Probably assists in splicing its own and other chloroplast group II introns. The protein is Maturase K of Thujopsis dolabrata (Hiba arborvitae).